We begin with the raw amino-acid sequence, 734 residues long: Terpene cyclase/mutase ntnI (734 aa).

Over residues 1-12 (MQSHIGQWTSTA) the composition is skewed to polar residues. Residues 1–26 (MQSHIGQWTSTAKGHLSRDENGDEKT) are disordered. Positions 16 to 26 (LSRDENGDEKT) are enriched in basic and acidic residues. PFTB repeat units lie at residues 130–172 (AIEI…RLLG), 493–534 (LHNA…SGKT), 570–610 (RTRG…ALAG), and 619–668 (SRKG…GLMH).

Belongs to the terpene cyclase/mutase family.

The protein operates within secondary metabolite biosynthesis; terpenoid biosynthesis. Functionally, terpene cyclase/mutase; part of the gene cluster that mediates the biosynthesis of the meroterpenoids nectripenoids A and B, as well as cochliquninone D and isocochliquninone E. The pathway probably begins with the HR-PKS ntnH that catalyzes two chain-extension steps to form a reduced triketide, which then primes the SAT domain in the NR-PKS ntnG to initiate three more cycles of extension to give a linear hexaketide corresponding to the polyketide part of nectripenoids. The FAD-dependent monooxygenase ntnJ then performs an oxidative decarboxylation at C11 of the ntnH/ntnG product, via an electrophilic aromatic hydroxylation with concomitant ipso-decarboxylation. The membrane-bound polyprenyl transferase ntnF then introduces a farnesyl group before the FAD-dependent monooxygenase ntnK functions as the first epoxidase on terminal C12'-C13' olefin, followed by a second epoxidation on C7'-C8' catalyzed by ntnA. The terpene cyclase/mutase ntnI then initiates the sequential tricyclic ring formation through protonation of the terminal epoxide and catalyzes the regioselective and stereoselective 6/6/6-tricyclic ring formation. The cytochrome P450 monooxygenase ntnM may then hydroxylate C1'. This is Terpene cyclase/mutase ntnI from Nectria sp.